Reading from the N-terminus, the 360-residue chain is Nucleoporin SEH1 (360 aa).

6 WD repeats span residues 10–49 (DHKD…EWHC), 55–96 (THSG…SNDK), 111–152 (DSRT…NLSQ), 160–210 (SCKL…RKYA), 217–258 (TVTD…KELT), and 276–315 (NHNS…NWKC). A Glycyl lysine isopeptide (Lys-Gly) (interchain with G-Cter in SUMO2) cross-link involves residue lysine 12. Serine 190 is subject to Phosphoserine. A compositionally biased stretch (low complexity) spans 324-342 (SPVNGSSQQGNSNPSVGSN). Residues 324 to 360 (SPVNGSSQQGNSNPSVGSNIPSLQNSLNGSSAGRKHS) are disordered. Polar residues predominate over residues 343 to 354 (IPSLQNSLNGSS).

This sequence belongs to the WD repeat SEC13 family. In terms of assembly, component of the Nup107-160 subcomplex of the nuclear pore complex (NPC). The Nup107-160 subcomplex includes NUP160, NUP133, NUP107, NUP98, NUP85, NUP43, NUP37, SEH1 and SEC13. The SEH1 subunit appears to be only weakly associated with the Nup107-160 subcomplex. Component of the GATOR2 subcomplex, composed of MIOS, SEC13, SEH1L, WDR24 and WDR59. The GATOR2 complex interacts with CASTOR1 and CASTOR2; the interaction is negatively regulated by arginine. The GATOR2 complex interacts with SESN1, SESN2 and SESN3; the interaction is negatively regulated by amino acids. SESN1, SESN2 and SESN3 convey leucine availability via direct interaction with SEH1L and WDR24.

Its subcellular location is the chromosome. The protein localises to the centromere. It localises to the kinetochore. The protein resides in the nucleus. It is found in the nuclear pore complex. Its subcellular location is the lysosome membrane. Its activity is regulated as follows. The GATOR2 complex is negatively regulated by the upstream amino acid sensors CASTOR1 and SESN2, which sequester the GATOR2 complex in absence of amino acids. In the presence of abundant amino acids, GATOR2 is released from CASTOR1 and SESN2 and activated. Its function is as follows. Component of the Nup107-160 subcomplex of the nuclear pore complex (NPC). The Nup107-160 subcomplex is required for the assembly of a functional NPC. The Nup107-160 subcomplex is also required for normal kinetochore microtubule attachment, mitotic progression and chromosome segregation. This subunit plays a role in recruitment of the Nup107-160 subcomplex to the kinetochore. Functionally, as a component of the GATOR2 complex, functions as an activator of the amino acid-sensing branch of the mTORC1 signaling pathway. The GATOR2 complex indirectly activates mTORC1 through the inhibition of the GATOR1 subcomplex. GATOR2 probably acts as an E3 ubiquitin-protein ligase toward GATOR1. In the presence of abundant amino acids, the GATOR2 complex mediates ubiquitination of the NPRL2 core component of the GATOR1 complex, leading to GATOR1 inactivation. In the absence of amino acids, GATOR2 is inhibited, activating the GATOR1 complex. Within the GATOR2 complex, SEC13 and SEH1L are required to stabilize the complex. The protein is Nucleoporin SEH1 (SEH1L) of Bos taurus (Bovine).